Reading from the N-terminus, the 96-residue chain is Small ribosomal subunit protein bS20 (96 aa).

The protein belongs to the bacterial ribosomal protein bS20 family.

In terms of biological role, binds directly to 16S ribosomal RNA. In Anaplasma marginale (strain St. Maries), this protein is Small ribosomal subunit protein bS20.